The following is a 451-amino-acid chain: Phosphoglucosamine mutase (451 aa).

The Phosphoserine intermediate role is filled by Ser102. Mg(2+) contacts are provided by Ser102, Asp242, Asp244, and Asp246. Ser102 bears the Phosphoserine mark.

The protein belongs to the phosphohexose mutase family. Mg(2+) is required as a cofactor. Activated by phosphorylation.

The enzyme catalyses alpha-D-glucosamine 1-phosphate = D-glucosamine 6-phosphate. Catalyzes the conversion of glucosamine-6-phosphate to glucosamine-1-phosphate. This chain is Phosphoglucosamine mutase, found in Staphylococcus aureus (strain Mu3 / ATCC 700698).